The following is a 267-amino-acid chain: uncharacterized protein (267 aa).

The stretch at 37-62 (DSSNNYKKKYKKYKRKYIDLKKQLNY) forms a coiled coil.

This is an uncharacterized protein from Acanthamoeba polyphaga (Amoeba).